Here is a 150-residue protein sequence, read N- to C-terminus: 3-dehydroquinate dehydratase (150 aa).

Tyr-23 acts as the Proton acceptor in catalysis. Substrate contacts are provided by Asn-79, His-85, and Asp-92. The Proton donor role is filled by His-105. Residues 106–107 (IS) and Arg-116 contribute to the substrate site.

This sequence belongs to the type-II 3-dehydroquinase family. As to quaternary structure, homododecamer.

The catalysed reaction is 3-dehydroquinate = 3-dehydroshikimate + H2O. It participates in metabolic intermediate biosynthesis; chorismate biosynthesis; chorismate from D-erythrose 4-phosphate and phosphoenolpyruvate: step 3/7. Catalyzes a trans-dehydration via an enolate intermediate. This Marinomonas sp. (strain MWYL1) protein is 3-dehydroquinate dehydratase.